We begin with the raw amino-acid sequence, 147 residues long: Putative toxin MJ0142 (147 aa).

The protein belongs to the UPF0332 family.

Its function is as follows. Putative toxin component of a putative type VII toxin-antitoxin (TA) system. Its cognate antitoxin might be MJ0141. The protein is Putative toxin MJ0142 of Methanocaldococcus jannaschii (strain ATCC 43067 / DSM 2661 / JAL-1 / JCM 10045 / NBRC 100440) (Methanococcus jannaschii).